Consider the following 142-residue polypeptide: Large ribosomal subunit protein uL11 (142 aa).

The segment at 86–105 is disordered; sequence LKSGSKEPGKQSAGQISRAK.

This sequence belongs to the universal ribosomal protein uL11 family. As to quaternary structure, part of the ribosomal stalk of the 50S ribosomal subunit. Interacts with L10 and the large rRNA to form the base of the stalk. L10 forms an elongated spine to which L12 dimers bind in a sequential fashion forming a multimeric L10(L12)X complex. Post-translationally, one or more lysine residues are methylated.

Its function is as follows. Forms part of the ribosomal stalk which helps the ribosome interact with GTP-bound translation factors. The sequence is that of Large ribosomal subunit protein uL11 from Chelativorans sp. (strain BNC1).